The following is a 309-amino-acid chain: Peptide methionine sulfoxide reductase MsrA/MsrB (309 aa).

The peptide methionine sulfoxide reductase A stretch occupies residues 1 to 153; it reads MIYLAGGCFW…PNGYCHIDIN (153 aa). C8 is a catalytic residue. The 124-residue stretch at 170–293 folds into the MsrB domain; the sequence is ATEIKEKLSA…NSLSITFIPK (124 aa). Residue C282 is the Nucleophile of the active site.

In the N-terminal section; belongs to the MsrA Met sulfoxide reductase family. This sequence in the C-terminal section; belongs to the MsrB Met sulfoxide reductase family.

The catalysed reaction is L-methionyl-[protein] + [thioredoxin]-disulfide + H2O = L-methionyl-(S)-S-oxide-[protein] + [thioredoxin]-dithiol. It carries out the reaction [thioredoxin]-disulfide + L-methionine + H2O = L-methionine (S)-S-oxide + [thioredoxin]-dithiol. It catalyses the reaction L-methionyl-[protein] + [thioredoxin]-disulfide + H2O = L-methionyl-(R)-S-oxide-[protein] + [thioredoxin]-dithiol. Its function is as follows. Has an important function as a repair enzyme for proteins that have been inactivated by oxidation. Catalyzes the reversible oxidation-reduction of methionine sulfoxide in proteins to methionine. This is Peptide methionine sulfoxide reductase MsrA/MsrB (msrAB) from Streptococcus pyogenes serotype M1.